We begin with the raw amino-acid sequence, 870 residues long: MSDGNMDVDESPVSWKVKSLEKLIDGSSFSSTLSRLSSSSRLIPTSRDFHFYYNFDEFKRPIDEITGTSQSTLATIGDSEQVWGKSMKFPGDVDDVYAEDWLCNVNDELIERFDVSVDEFQRIRKKEKEIGRSVVADDGDDGFQMVYGKKKKPVGNVVTGSAAVNGGGSVIDVKMAERDKNSSGKAKVPFHVPTIKKPQEEYNILVNNANLPFEHVWLERSEDDLRAMHPLEKFSVLDFVDKDVNEMEPVKPLPLEQTPFKFVQEVKDLKELVAKLRSVEEFAVDLEHNQYRSFQGLTCLMQISTRTEDYIVDTFKLRIHIGPYLREIFKDPKKKKVMHGADRDIIWLQRDFGIYVCNLFDTGQASRVLNLERNSLEFLLQHFCGVTANKEYQNADWRIRPLPEEMTRYAREDTHYLLYIYDLIKLELQRMAKDDAHTDSPLLEVYKRSYDVCTQLYEKELLTENSYLHVYGLQAAGFNAAQLAIVAGLCEWRDFIARAEDESTGYVLPNKVLLEIAKEMPDSVGKLRRMLKSKHPYIERNVDSVVSVIRQSMQHYAAFESAALSLKDVSPGNVMDKNIEPISEKKDLHTGDVASPSLKENSSQLESTRDLIMGAANTNEGRGLGSGLFGSAKVSAAVRISKKPSSGLGALLGNAASKKKSRTDEKVKEDVKLEQIRSSVNLSFHSFTEKVPDSKSTSETSPKVYGKPEEMSSTMPASVSKEDGVKELKDDSEEASEIVGTSGRVSESKVSSSEMGDIILLENGDEKKVDAEDEPMSLSELSTNFQKCFKSMNKSKKAQKQTEFLNIEPFDYEAARKEVKFGEGHKGRQGKREAAAGQKKGSTQEQSEFGQGKRRQAFPASGNRSMSFKN.

One can recognise a 3'-5' exonuclease domain in the interval 263 to 428 (VQEVKDLKEL…YIYDLIKLEL (166 aa)). One can recognise an HRDC domain in the interval 479-559 (NAAQLAIVAG…RQSMQHYAAF (81 aa)). 4 disordered regions span residues 583 to 605 (SEKKDLHTGDVASPSLKENSSQL), 649 to 668 (GALLGNAASKKKSRTDEKVK), 688 to 775 (TEKV…EDEP), and 821 to 870 (FGEG…SFKN). 2 stretches are compositionally biased toward basic and acidic residues: residues 720 to 729 (SKEDGVKELK) and 821 to 834 (FGEGHKGRQGKREA). Over residues 840–849 (KGSTQEQSEF) the composition is skewed to polar residues.

Its subcellular location is the nucleus. The protein localises to the nucleolus. The protein resides in the cytoplasm. Functionally, acts as an important epigenetic regulator through multiple silencing mechanisms. Involved in association with RRP6L1 in the silencing of the solo LTR locus. Controls levels of non-coding RNAs (ncRNAs) from the solo LTR locus. Seems to function independently of the RNA-mediated gene silencing (RdDM) pathway. Functions redundantly with RRP6L1 in the regulation of FLC locus. Participates in the maintenance of trimethylated 'Lys-27' (H3K27me3) at FLC locus via the regulation of antisense long non-coding RNAs (lncRNAs) and the regulation of diverse antisense RNAs derived from the FLC locus. Seems not involved in the exosomal RNA degradation. May be involved in poly(A)-mediated RNA degradation. In Arabidopsis thaliana (Mouse-ear cress), this protein is Protein RRP6-like 2.